Consider the following 180-residue polypeptide: Aspartate 1-decarboxylase (180 aa).

The active-site Schiff-base intermediate with substrate; via pyruvic acid is S24. S24 bears the Pyruvic acid (Ser) mark. Substrate is bound at residue T56. Y57 functions as the Proton donor in the catalytic mechanism. 72–74 serves as a coordination point for substrate; the sequence is GAA.

The protein belongs to the PanD family. In terms of assembly, heterooctamer of four alpha and four beta subunits. Pyruvate serves as cofactor. In terms of processing, is synthesized initially as an inactive proenzyme, which is activated by self-cleavage at a specific serine bond to produce a beta-subunit with a hydroxyl group at its C-terminus and an alpha-subunit with a pyruvoyl group at its N-terminus.

The protein localises to the cytoplasm. It carries out the reaction L-aspartate + H(+) = beta-alanine + CO2. It participates in cofactor biosynthesis; (R)-pantothenate biosynthesis; beta-alanine from L-aspartate: step 1/1. Catalyzes the pyruvoyl-dependent decarboxylation of aspartate to produce beta-alanine. This Paramagnetospirillum magneticum (strain ATCC 700264 / AMB-1) (Magnetospirillum magneticum) protein is Aspartate 1-decarboxylase.